Consider the following 858-residue polypeptide: Bifunctional uridylyltransferase/uridylyl-removing enzyme (858 aa).

Residues 1–324 (MSAHAAPSPE…PATSGITRVL (324 aa)) are uridylyltransferase. Residues 325 to 681 (SADRFVEKQG…ARPSPIGDAL (357 aa)) are uridylyl-removing. The 123-residue stretch at 443–565 (VDQHILMVLR…VGNERYLTAL (123 aa)) folds into the HD domain. ACT domains lie at 682–763 (QVLV…PSKG) and 790–858 (ILSV…AIAV).

The protein belongs to the GlnD family. The cofactor is Mg(2+).

It catalyses the reaction [protein-PII]-L-tyrosine + UTP = [protein-PII]-uridylyl-L-tyrosine + diphosphate. It carries out the reaction [protein-PII]-uridylyl-L-tyrosine + H2O = [protein-PII]-L-tyrosine + UMP + H(+). Its activity is regulated as follows. Uridylyltransferase (UTase) activity is inhibited by glutamine, while glutamine activates uridylyl-removing (UR) activity. In terms of biological role, modifies, by uridylylation and deuridylylation, the PII regulatory proteins (GlnB and homologs), in response to the nitrogen status of the cell that GlnD senses through the glutamine level. Under low glutamine levels, catalyzes the conversion of the PII proteins and UTP to PII-UMP and PPi, while under higher glutamine levels, GlnD hydrolyzes PII-UMP to PII and UMP (deuridylylation). Thus, controls uridylylation state and activity of the PII proteins, and plays an important role in the regulation of nitrogen assimilation and metabolism. This Burkholderia orbicola (strain MC0-3) protein is Bifunctional uridylyltransferase/uridylyl-removing enzyme.